We begin with the raw amino-acid sequence, 346 residues long: Histone PARylation factor 1 (346 aa).

Met1 bears the N-acetylmethionine mark. N6-acetyllysine occurs at positions 19, 186, and 233. Asp235 carries the polyADP-ribosyl aspartic acid modification. Tyr238 carries the post-translational modification ADP-ribosyltyrosine. Glu240 carries the polyADP-ribosyl glutamic acid modification. An interaction with PARP1 region spans residues 242 to 346 (PETDADLKRI…SEENIDQLAG (105 aa)). Residue Glu284 is the Proton donor of the active site.

This sequence belongs to the HPF1 family. As to quaternary structure, interacts with PARP1 (via the PARP catalytic domain). Interacts with PARP2 (via the PARP catalytic domain). Interacts with core nucleosomes in a PARP1- and PARP2-dependent manner.

The protein localises to the chromosome. It is found in the nucleus. Functionally, cofactor for serine ADP-ribosylation that confers serine specificity on PARP1 and PARP2 and plays a key role in DNA damage response. Initiates the repair of double-strand DNA breaks: recruited to DNA damage sites by PARP1 and PARP2 and switches the amino acid specificity of PARP1 and PARP2 from aspartate or glutamate to serine residues, licensing serine ADP-ribosylation of target proteins. Serine ADP-ribosylation of target proteins, such as histones, promotes decompaction of chromatin and the recruitment of repair factors leading to the reparation of DNA strand breaks. Serine ADP-ribosylation of proteins constitutes the primary form of ADP-ribosylation of proteins in response to DNA damage. HPF1 acts by completing the active site of PARP1 and PARP2: forms a composite active site composed of residues from HPF1 and PARP1 or PARP2. While HPF1 promotes the initiation of serine ADP-ribosylation, it restricts the polymerase activity of PARP1 and PARP2 in order to limit the length of poly-ADP-ribose chains. HPF1 also promotes tyrosine ADP-ribosylation, probably by conferring tyrosine specificity on PARP1. The sequence is that of Histone PARylation factor 1 from Mus musculus (Mouse).